We begin with the raw amino-acid sequence, 336 residues long: UDP-3-O-acylglucosamine N-acyltransferase (336 aa).

His-233 acts as the Proton acceptor in catalysis.

This sequence belongs to the transferase hexapeptide repeat family. LpxD subfamily. As to quaternary structure, homotrimer.

It catalyses the reaction a UDP-3-O-[(3R)-3-hydroxyacyl]-alpha-D-glucosamine + a (3R)-hydroxyacyl-[ACP] = a UDP-2-N,3-O-bis[(3R)-3-hydroxyacyl]-alpha-D-glucosamine + holo-[ACP] + H(+). Its pathway is bacterial outer membrane biogenesis; LPS lipid A biosynthesis. In terms of biological role, catalyzes the N-acylation of UDP-3-O-acylglucosamine using 3-hydroxyacyl-ACP as the acyl donor. Is involved in the biosynthesis of lipid A, a phosphorylated glycolipid that anchors the lipopolysaccharide to the outer membrane of the cell. The chain is UDP-3-O-acylglucosamine N-acyltransferase from Helicobacter pylori (strain HPAG1).